The chain runs to 155 residues: Nucleosome assembly protein 1-like 5 (155 aa).

The segment covering 1–16 (MADPEKQGPAESRAED) has biased composition (basic and acidic residues). The tract at residues 1 to 60 (MADPEKQGPAESRAEDEVMEGAQGGEDAATGDSATAPAAEEPQAPAENAPKPKNDFIESL) is disordered. A compositionally biased stretch (low complexity) spans 27 to 49 (DAATGDSATAPAAEEPQAPAENA). Residues 68–94 (VLALKKLQKRCDKIEAKFDKEFQALEK) adopt a coiled-coil conformation. The tract at residues 119–155 (WTLEGEDDEDDEEEEDEEEEEEEAAAGATGGPDSAEK) is disordered. Residues 122–142 (EGEDDEDDEEEEDEEEEEEEA) are compositionally biased toward acidic residues.

The protein belongs to the nucleosome assembly protein (NAP) family.

Its subcellular location is the nucleus. In Rattus norvegicus (Rat), this protein is Nucleosome assembly protein 1-like 5 (Nap1l5).